The following is a 587-amino-acid chain: Ankyrin repeat and SOCS box protein 14 (587 aa).

ANK repeat units follow at residues 82-112 (IGWI…SLWE), 117-146 (NGET…NPNA), 150-179 (EGNS…DVNL), 183-212 (NERT…HPDP), 216-245 (YGFT…IFCL), 248-277 (DSSS…DANI), 281-310 (SGHL…LAAI), 313-342 (SGIS…DVNF), 355-384 (HRKS…LPNQ), 385-414 (DPVN…NVNY), and 416-449 (CRVN…DTER). The region spanning 521–576 (WSEIHFILTNPRSLKHLCRLKIRKCMGRLHLRCPVFMSFLPLPNRLKAYVLYKEYD) is the SOCS box domain.

This sequence belongs to the ankyrin SOCS box (ASB) family. Interacts with MAPRE2; this interaction promotes MAPRE2 degradation.

The protein operates within protein modification; protein ubiquitination. May be a substrate-recognition component of a SCF-like ECS (Elongin-Cullin-SOCS-box protein) E3 ubiquitin-protein ligase complex which mediates the ubiquitination and subsequent proteasomal degradation of target proteins. Plays a role in the inhibition of cardiomyocyte nuclear proliferation by mediating the ubiquitination and degradation of MAPRE2. In Homo sapiens (Human), this protein is Ankyrin repeat and SOCS box protein 14 (ASB14).